Here is a 333-residue protein sequence, read N- to C-terminus: 1,5-anhydro-D-fructose reductase (333 aa).

Residues 9–12, 33–34, R38, 71–76, 93–94, N120, 162–163, and Y283 contribute to the NADP(+) site; these read ASTI, ST, TTNELH, EK, and WR.

As to quaternary structure, monomer.

The catalysed reaction is 1,5-anhydro-D-mannitol + NADP(+) = 1,5-anhydro-D-fructose + NADPH + H(+). In terms of biological role, catalyzes the NADPH-specific reduction of 1,5-anhydro-D-fructose to 1,5-anhydro-D-mannitol. Also shows some activity against structurally related compounds such as 3-keto-1,5-anhydro-D-fructose, D-glucosone and D-xylosone. The enzyme cannot use NADH as cosubstrate. This Ensifer adhaerens (Sinorhizobium morelense) protein is 1,5-anhydro-D-fructose reductase (afr).